We begin with the raw amino-acid sequence, 430 residues long: Tol-Pal system protein TolB (430 aa).

An N-terminal signal peptide occupies residues methionine 1–alanine 21.

Belongs to the TolB family. In terms of assembly, the Tol-Pal system is composed of five core proteins: the inner membrane proteins TolA, TolQ and TolR, the periplasmic protein TolB and the outer membrane protein Pal. They form a network linking the inner and outer membranes and the peptidoglycan layer.

It is found in the periplasm. In terms of biological role, part of the Tol-Pal system, which plays a role in outer membrane invagination during cell division and is important for maintaining outer membrane integrity. TolB occupies a key intermediary position in the Tol-Pal system because it communicates directly with both membrane-embedded components, Pal in the outer membrane and TolA in the inner membrane. The chain is Tol-Pal system protein TolB from Klebsiella pneumoniae (strain 342).